We begin with the raw amino-acid sequence, 169 residues long: Large ribosomal subunit protein uL5 (169 aa).

Belongs to the universal ribosomal protein uL5 family. In terms of assembly, part of the 50S ribosomal subunit; contacts the 5S rRNA and probably tRNA. Forms a bridge to the 30S subunit in the 70S ribosome.

Functionally, this is one of the proteins that bind and probably mediate the attachment of the 5S RNA into the large ribosomal subunit, where it forms part of the central protuberance. In the 70S ribosome it contacts protein S13 of the 30S subunit (bridge B1b), connecting the 2 subunits; this bridge is implicated in subunit movement. May contact the P site tRNA; the 5S rRNA and some of its associated proteins might help stabilize positioning of ribosome-bound tRNAs. The chain is Large ribosomal subunit protein uL5 from Methanococcoides burtonii (strain DSM 6242 / NBRC 107633 / OCM 468 / ACE-M).